We begin with the raw amino-acid sequence, 312 residues long: Structure-specific endonuclease subunit SLX1 (312 aa).

Positions aspartate 9–lysine 92 constitute a GIY-YIG domain. An SLX1-type zinc finger spans residues cysteine 219 to cysteine 282.

It belongs to the SLX1 family. As to quaternary structure, forms a heterodimer with SLX4. A divalent metal cation is required as a cofactor.

Its subcellular location is the nucleus. Its function is as follows. Catalytic subunit of the SLX1-SLX4 structure-specific endonuclease that resolves DNA secondary structures generated during DNA repair and recombination. Has endonuclease activity towards branched DNA substrates, introducing single-strand cuts in duplex DNA close to junctions with ss-DNA. The sequence is that of Structure-specific endonuclease subunit SLX1 from Candida glabrata (strain ATCC 2001 / BCRC 20586 / JCM 3761 / NBRC 0622 / NRRL Y-65 / CBS 138) (Yeast).